Here is a 179-residue protein sequence, read N- to C-terminus: Natural killer cells antigen CD94 (179 aa).

Residues 1 to 10 are Cytoplasmic-facing; that stretch reads MAVFKTTLWR. The helical; Signal-anchor for type II membrane protein transmembrane segment at 11 to 31 threads the bilayer; sequence LISGTLGIICLSLMATLGILL. The Extracellular portion of the chain corresponds to 32-179; the sequence is KNSFTKLSIE…NRYICKQQLI (148 aa). Disulfide bonds link C58–C70 and C61–C72. In terms of domain architecture, C-type lectin spans 68–175; the sequence is YRCNCYFISS…CEDKNRYICK (108 aa). N-linked (GlcNAc...) asparagine glycans are attached at residues N83 and N132. 2 cysteine pairs are disulfide-bonded: C89-C174 and C152-C166.

As to quaternary structure, can form disulfide-bonded heterodimer with NKG2 family members KLRC1 and KLRC2. KLRD1-KLRC1 heterodimer interacts with peptide-bound MHC-E-B2M heterotrimeric complex. KLRD1 plays a prominent role in directly interacting with MHC-E. KLRD1-KLRC1 interacts with much higher affinity with peptide-bound MHC-E-B2M than KLRD1-KLRC2. Interacts with the adapter protein TYROBP/DAP12; this interaction is required for cell surface expression and cell activation. Natural killer cells.

The protein localises to the cell membrane. Functionally, immune receptor involved in self-nonself discrimination. In complex with KLRC1 or KLRC2 on cytotoxic and regulatory lymphocyte subsets, recognizes non-classical major histocompatibility (MHC) class Ib molecule MHC-E loaded with self-peptides derived from the signal sequence of classical MHC class Ia and non-classical MHC class Ib molecules. Enables cytotoxic cells to monitor the expression of MHC class I molecules in healthy cells and to tolerate self. Primarily functions as a ligand binding subunit as it lacks the capacity to signal. KLRD1-KLRC1 acts as an immune inhibitory receptor. Key inhibitory receptor on natural killer (NK) cells that regulates their activation and effector functions. Dominantly counteracts T cell receptor signaling on a subset of memory/effector CD8-positive T cells as part of an antigen-driven response to avoid autoimmunity. On intraepithelial CD8-positive gamma-delta regulatory T cells triggers TGFB1 secretion, which in turn limits the cytotoxic programming of intraepithelial CD8-positive alpha-beta T cells, distinguishing harmless from pathogenic antigens. In MHC-E-rich tumor microenvironment, acts as an immune inhibitory checkpoint and may contribute to progressive loss of effector functions of NK cells and tumor-specific T cells, a state known as cell exhaustion. Upon MHC-E-peptide binding, transmits intracellular signals through KLRC1 immunoreceptor tyrosine-based inhibition motifs (ITIMs) by recruiting INPP5D/SHIP-1 and INPPL1/SHIP-2 tyrosine phosphatases to ITIMs, and ultimately opposing signals transmitted by activating receptors through dephosphorylation of proximal signaling molecules. Its function is as follows. KLRD1-KLRC2 acts as an immune activating receptor. On cytotoxic lymphocyte subsets recognizes MHC-E loaded with signal sequence-derived peptides from non-classical MHC class Ib MHC-G molecules, likely playing a role in the generation and effector functions of adaptive NK cells and in maternal-fetal tolerance during pregnancy. Regulates the effector functions of terminally differentiated cytotoxic lymphocyte subsets, and in particular may play a role in adaptive NK cell response to viral infection. Upon MHC-E-peptide binding, transmits intracellular signals via the adapter protein TYROBP/DAP12, triggering the phosphorylation of proximal signaling molecules and cell activation. This chain is Natural killer cells antigen CD94 (KLRD1), found in Pan troglodytes (Chimpanzee).